The chain runs to 921 residues: Collagen alpha-1(IX) chain (921 aa).

Residues 1–23 (MKTCWKIPVFFFVCSFLEPWASA) form the signal peptide. The nonhelical region (NC4) stretch occupies residues 24–268 (AVKRRPRFPV…ITPSQTTDER (245 aa)). Intrachain disulfides connect Cys44–Cys242 and Cys198–Cys252. The Laminin G-like domain occupies 50–244 (GQDDLPGFDL…LQWMLIHCDP (195 aa)). N-linked (GlcNAc...) asparagine glycosylation is present at Asn171. 3 residues coordinate Zn(2+): Asp213, Asp215, and His253. Disordered regions lie at residues 254-759 (ELPA…APTD) and 783-905 (RPDS…EPAS). 8 consecutive Collagen-like domains span residues 269–324 (GPPG…TPGA), 325–356 (DGLT…GFPG), 358–403 (GIPG…GTIG), 416–472 (PPGR…GLRG), 473–516 (ITGI…AGPK), 587–643 (EKGS…GKLG), 655–712 (GPPG…GEPG), and 713–755 (LRGP…PPGR). A triple-helical region (COL3) region spans residues 269–405 (GPPGEQGPPG…PGPRGTIGFH (137 aa)). 2 stretches are compositionally biased toward pro residues: residues 273 to 285 (EQGP…PPGV) and 298 to 307 (KGPPGPPGPA). Positions 368-383 (TAGLPGELGRVGPVGD) are enriched in low complexity. The span at 387–398 (RGPPGPPGPPGP) shows a compositional bias: pro residues. Residues 406-417 (DGDPLCPNACPP) are nonhelical region (NC3). A triple-helical region (COL2) region spans residues 418–756 (GRSGYPGLPG…PGVQGPPGRA (339 aa)). A compositionally biased stretch (basic and acidic residues) spans 479–489 (DKGEKGARGLD). 2 stretches are compositionally biased toward low complexity: residues 602–621 (NSGK…RGPQ) and 630–650 (LGPV…SPGL). A nonhelical region (NC2) region spans residues 757 to 786 (PTDQHIKQVCMRVIQEHFAEMAASLKRPDS). The tract at residues 787–901 (GATGLPGRPG…PGPPGLPGFC (115 aa)) is triple-helical region (COL1). Collagen-like domains are found at residues 790 to 847 (GLPG…GPPG) and 848 to 899 (RGPN…GLPG). Over residues 794 to 804 (RPGPPGPPGPP) the composition is skewed to pro residues. Over residues 833-845 (PKGDLGEKGERGP) the composition is skewed to basic and acidic residues. A compositionally biased stretch (pro residues) spans 888–897 (VPGPPGPPGL). Positions 902–921 (EPASCTMQAGQRAFNKGPDP) are nonhelical region (NC1).

Belongs to the fibril-associated collagens with interrupted helices (FACIT) family. Heterotrimer of an alpha 1(IX), an alpha 2(IX) and an alpha 3(IX) chain. Post-translationally, covalently linked to the telopeptides of type II collagen by lysine-derived cross-links. In terms of processing, prolines at the third position of the tripeptide repeating unit (G-X-Y) are hydroxylated in some or all of the chains.

It is found in the secreted. It localises to the extracellular space. The protein resides in the extracellular matrix. Functionally, structural component of hyaline cartilage and vitreous of the eye. The chain is Collagen alpha-1(IX) chain (COL9A1) from Homo sapiens (Human).